The chain runs to 271 residues: Ribosomal RNA small subunit methyltransferase A (271 aa).

Residues H18, L20, G45, E66, D91, and N113 each contribute to the S-adenosyl-L-methionine site.

It belongs to the class I-like SAM-binding methyltransferase superfamily. rRNA adenine N(6)-methyltransferase family. RsmA subfamily.

It localises to the cytoplasm. It carries out the reaction adenosine(1518)/adenosine(1519) in 16S rRNA + 4 S-adenosyl-L-methionine = N(6)-dimethyladenosine(1518)/N(6)-dimethyladenosine(1519) in 16S rRNA + 4 S-adenosyl-L-homocysteine + 4 H(+). Functionally, specifically dimethylates two adjacent adenosines (A1518 and A1519) in the loop of a conserved hairpin near the 3'-end of 16S rRNA in the 30S particle. May play a critical role in biogenesis of 30S subunits. The polypeptide is Ribosomal RNA small subunit methyltransferase A (Baumannia cicadellinicola subsp. Homalodisca coagulata).